We begin with the raw amino-acid sequence, 2174 residues long: Spectinabilin polyketide synthase system protein NorB (2174 aa).

A Ketosynthase family 3 (KS3) domain is found at 34–459 (REPVAVVAMG…GTNAHVILEQ (426 aa)). Residues Cys206, His341, and His381 each act as for beta-ketoacyl synthase activity in the active site. A Malonyl-CoA:ACP transacylase (MAT) domain is found at 567–888 (FLFSGQGSQR…AAVSRAFVQG (322 aa)). The tract at residues 938 to 1060 (HPLLGACLEL…GQLAPEAAAP (123 aa)) is N-terminal hotdog fold. The 275-residue stretch at 938-1212 (HPLLGACLEL…TRPITAGQLR (275 aa)) folds into the PKS/mFAS DH domain. Residue His970 is the Proton acceptor; for dehydratase activity of the active site. The segment at 1056–1075 (EAAAPPAAPGEDWPPPGAEP) is disordered. Residues 1061–1074 (PAAPGEDWPPPGAE) are compositionally biased toward pro residues. Residues 1073–1212 (AEPVPLEGFY…TRPITAGQLR (140 aa)) form a C-terminal hotdog fold region. The active-site Proton donor; for dehydratase activity is Asp1134. One can recognise an Enoyl reductase (ER) domain in the interval 1424 to 1726 (GTVDDLVLAP…QARNVGKLVL (303 aa)). One can recognise a Ketoreductase (KR) domain in the interval 1736–1915 (GTILVTGGYG…ATALAWGMWA (180 aa)). A Carrier domain is found at 2017 to 2092 (PAVRELVRGQ…ALTDAIEARL (76 aa)). An O-(pantetheine 4'-phosphoryl)serine modification is found at Ser2052.

The spectinabilin polyketide synthase complex is composed of 4 proteins, NorA, NorA', NorB and NorC. The complex comprises 6 modules with a total of 28 catalytic domains catalyzing 7 chain elongations. NorA comprises one module, NorA' two modules, NorB one module and NorC two modules. The cofactor is pantetheine 4'-phosphate.

It catalyses the reaction 4-nitrobenzoyl-CoA + 6 (S)-methylmalonyl-CoA + malonyl-CoA + 6 NADPH + 12 H(+) = demethyldeoxyspectinabilin + 7 CO2 + 6 NADP(+) + 8 CoA + 5 H2O. The protein operates within antibiotic biosynthesis. Its pathway is polyketide biosynthesis. In terms of biological role, component of a type I modular polyketide synthase (PKS) that generates the backbone of the antibiotic spectinabilin (also known as neoaureothin), a nitroaryl-substituted polyketide metabolite. This PKS system accepts the unusual starter unit 4-nitrobenzoyl-CoA and extends it by 6 molecules of (S)-methylmalonyl-CoA and a single molecule of malonyl-CoA. The protein is Spectinabilin polyketide synthase system protein NorB of Streptomyces orinoci (Streptoverticillium orinoci).